Reading from the N-terminus, the 465-residue chain is Uronate isomerase (465 aa).

This sequence belongs to the metallo-dependent hydrolases superfamily. Uronate isomerase family.

It catalyses the reaction D-glucuronate = D-fructuronate. It carries out the reaction aldehydo-D-galacturonate = keto-D-tagaturonate. The protein operates within carbohydrate metabolism; pentose and glucuronate interconversion. This is Uronate isomerase from Streptococcus equi subsp. equi (strain 4047).